Reading from the N-terminus, the 921-residue chain is Phototropin-1A (921 aa).

Positions methionine 1–glycine 11 are enriched in gly residues. Disordered regions lie at residues methionine 1 to leucine 59 and threonine 88 to alanine 118. Residues serine 40–alanine 51 show a composition bias toward low complexity. Residues arginine 97 to alanine 117 are compositionally biased toward polar residues. The 75-residue stretch at valine 123–serine 197 folds into the PAS 1 domain. Residues asparagine 172–glutamine 177, arginine 190, asparagine 205, asparagine 215, and glutamine 236 contribute to the FMN site. Residue cysteine 173 is modified to S-4a-FMN cysteine. The 55-residue stretch at serine 197 to valine 251 folds into the PAC 1 domain. The span at arginine 286–threonine 295 shows a compositional bias: polar residues. 2 disordered regions span residues arginine 286 to arginine 347 and serine 364 to glutamate 390. Composition is skewed to basic and acidic residues over residues proline 312 to serine 321 and serine 364 to aspartate 376. The PAS 2 domain maps to arginine 400 to glutamine 473. FMN-binding positions include asparagine 449–glutamine 454, arginine 467, asparagine 482, asparagine 492, and glutamine 513. Cysteine 450 carries the S-4a-FMN cysteine modification. Positions alanine 474–glycine 528 constitute a PAC 2 domain. Positions phenylalanine 594–phenylalanine 881 constitute a Protein kinase domain. ATP-binding positions include leucine 600 to valine 608 and lysine 623. The active-site Proton acceptor is the aspartate 719.

The protein belongs to the protein kinase superfamily. Ser/Thr protein kinase family. As to quaternary structure, homodimer. FMN is required as a cofactor. In terms of processing, autophosphorylated in response to blue light irradiation. Post-translationally, 2 molecules of FMN bind covalently to cysteines after exposure to blue light and are reversed in the dark. Highly expressed in coleoptiles of dark-grown seedlings.

It catalyses the reaction L-seryl-[protein] + ATP = O-phospho-L-seryl-[protein] + ADP + H(+). It carries out the reaction L-threonyl-[protein] + ATP = O-phospho-L-threonyl-[protein] + ADP + H(+). Protein kinase that acts as a blue light photoreceptor in a signal-transduction pathway for phototropic responses. Regulates a wide range of physiological activities in plants that maximize the efficiency of photosynthesis, such as chloroplast relocations, stomata opening, and leaf expansion. In Oryza sativa subsp. japonica (Rice), this protein is Phototropin-1A (PHOT1A).